Consider the following 397-residue polypeptide: MGKAKFERSKPHVNIGTIGHVDHGKTTLTAAITITMHNRYGTGGAVAFDMIDKAPEERERGITISTAHVEYETDKRHYAHVDCPGHADYVKNMITGAAQMDGAILVCSAADGPMPQTREHILLSRQVGVPYIVVFLNKCDMVDDEELLELVEMEVRDLLNMYEFPGDDTPVIMGSALKALEDPAGPWGDKIVELFDAIDTWIPEPVRDTDKPFLMPVEDVFSITGRGTVATGRIERGIVKVQEEISLVGLSEAPRKLVVTGVEMFRKLLDQGQAGDNVGILLRGIQRDEIERGQVLAKTGSIQPHTKFMAEVYVLKKEEGGRHTPFFDGYRPQFYFRTTDVTGSIKLPEGVEMVMPGDNITMEIELISPIATEEGLRFAIREGGRTVGAGVVASIIE.

One can recognise a tr-type G domain in the interval 10 to 206 (KPHVNIGTIG…AIDTWIPEPV (197 aa)). A G1 region spans residues 19–26 (GHVDHGKT). GTP is bound at residue 19 to 26 (GHVDHGKT). Thr26 provides a ligand contact to Mg(2+). Positions 61–65 (GITIS) are G2. Residues 82–85 (DCPG) are G3. GTP contacts are provided by residues 82 to 86 (DCPGH) and 137 to 140 (NKCD). The G4 stretch occupies residues 137-140 (NKCD). The interval 175–177 (SAL) is G5.

Belongs to the TRAFAC class translation factor GTPase superfamily. Classic translation factor GTPase family. EF-Tu/EF-1A subfamily. Monomer.

The protein resides in the cytoplasm. The catalysed reaction is GTP + H2O = GDP + phosphate + H(+). GTP hydrolase that promotes the GTP-dependent binding of aminoacyl-tRNA to the A-site of ribosomes during protein biosynthesis. The protein is Elongation factor Tu 1 of Alkaliphilus metalliredigens (strain QYMF).